The primary structure comprises 151 residues: Deoxyuridine 5'-triphosphate nucleotidohydrolase (151 aa).

Substrate is bound by residues 70 to 72, N83, 87 to 89, and M97; these read RSG and LID.

It belongs to the dUTPase family. The cofactor is Mg(2+).

The catalysed reaction is dUTP + H2O = dUMP + diphosphate + H(+). It functions in the pathway pyrimidine metabolism; dUMP biosynthesis; dUMP from dCTP (dUTP route): step 2/2. This enzyme is involved in nucleotide metabolism: it produces dUMP, the immediate precursor of thymidine nucleotides and it decreases the intracellular concentration of dUTP so that uracil cannot be incorporated into DNA. The chain is Deoxyuridine 5'-triphosphate nucleotidohydrolase from Pseudomonas fluorescens (strain ATCC BAA-477 / NRRL B-23932 / Pf-5).